The primary structure comprises 166 residues: Phosphopantetheine adenylyltransferase (166 aa).

Serine 8 serves as a coordination point for substrate. Residues 8–9 and histidine 16 contribute to the ATP site; that span reads SF. Positions 40, 72, and 86 each coordinate substrate. Residues 87–89, glutamate 97, and 122–128 contribute to the ATP site; these read GLR and HSFLSSS.

This sequence belongs to the bacterial CoaD family. Homohexamer. Mg(2+) is required as a cofactor.

The protein localises to the cytoplasm. It carries out the reaction (R)-4'-phosphopantetheine + ATP + H(+) = 3'-dephospho-CoA + diphosphate. Its pathway is cofactor biosynthesis; coenzyme A biosynthesis; CoA from (R)-pantothenate: step 4/5. In terms of biological role, reversibly transfers an adenylyl group from ATP to 4'-phosphopantetheine, yielding dephospho-CoA (dPCoA) and pyrophosphate. The sequence is that of Phosphopantetheine adenylyltransferase from Synechococcus sp. (strain RCC307).